We begin with the raw amino-acid sequence, 416 residues long: MSAEIICVGTELLLGEILNSNAQFLAQQLASLGIPHYYQTVVGDNPTRIKKVVAIACDRARLLIFTGGLGPTPDDLTTETLADFFATPLEERPEILADLERKYAHRGGFSPSNRKQALLPVGAQILPNPLGTAPGMIWQPRTGLTILTFPGVPAEMKQMWHETAVPFLCSQGWGKEVIYSRVLRFWGIPESMLAEKVAAQIAREHPTVAPYASNGEARLRITVRAKDEAEAQQLIQPVEAEIRQIIGLDCYGADEDTLAGVVARLLQERQQTVAVAESCTGGGLGEMLTRLPGSSLYFKGGVIAYANEIKVTLLGVNPEELEREGAVSAAVAAQMALGVKTRLASDWGVSITGIAGPGGATLRKPVGLVYIGVALPNGEVISREFRFSGQRGRDWVRYLSTMNALDLLRRQLLVNP.

The protein belongs to the CinA family.

This Thermosynechococcus vestitus (strain NIES-2133 / IAM M-273 / BP-1) protein is CinA-like protein.